We begin with the raw amino-acid sequence, 561 residues long: MSSENVPSFRWTQSLRRGLSNWTHAVKGDVLADARAIVSALDFHQVAQVQRMMRKDKRSEADLTRLRDMNKEVDALMMMRSAQKDNILKVGGLSKDELMELASDLDKLRKKVQRTEGGGQPGVYAGNLTSSQLNQRSEILKMMGMGTGPRGPVGGVVKVWDIKDSSLLVNQFGSMPALTIACMTQQGGEQMNDVVQALTSLGLVYTVKYPNLSDLEKLTEKHPCLKLITQEPAQINISGYNLSLSAAVKADACMIDGGNMLETLQVKPSMFSTLIKTILEVKNREGMFVSPSPGQRNPYENILYKVCLSGDGWPYIGSRSQIKGRAWENTTVDLEGKPSVNHPPVRNGGSPDLKQIPKTKEDEVIRAIEQLDPRGTTWVDIEGPPGDPVELALFQPETGNYLHCYRRPHNENAFKDQSKFSHGLLLKDLADTQPGLISCIIRHLPNNMVLTAQGNDDIIKLLEMHGRRDIKVLDVKLSSDQARLMEDVVWERYNMLCVKHTGLVIKKKKKGAAPGSANPHCALLDCIMFDATVTGYLRDQKPKRLLPLDTLYRDNANLINL.

Residues 53–237 (MRKDKRSEAD…ITQEPAQINI (185 aa)) are binding site for the cap structure m7GTP. Residues aspartate 380 and glutamate 382 each coordinate Mn(2+). Residues glutamate 390, cysteine 497, histidine 500, and cysteine 521 each coordinate Zn(2+). Residue aspartate 525 participates in Mn(2+) binding.

This sequence belongs to the arenaviridae nucleocapsid protein family. In terms of assembly, homomultimerizes to form the nucleocapsid. Binds to viral genomic RNA. Interacts with glycoprotein G2. Interacts with protein Z; this interaction probably directs the encapsidated genome to budding sites. Interacts with protein L; this interaction does not interfere with Z-L interaction. Interacts with host IKBKE (via Protein kinase domain); the interaction inhibits IKBKE kinase activity.

It is found in the virion. The protein resides in the host cytoplasm. Encapsidates the genome, protecting it from nucleases. The encapsidated genomic RNA is termed the nucleocapsid (NC). Serves as template for viral transcription and replication. The increased presence of protein N in host cell does not seem to trigger the switch from transcription to replication as observed in other negative strain RNA viruses. Through the interaction with host IKBKE, strongly inhibits the phosphorylation and nuclear translocation of host IRF3, a protein involved in interferon activation pathway, leading to the inhibition of interferon-beta and IRF3-dependent promoters activation. Also encodes a functional 3'-5' exoribonuclease that degrades preferentially dsRNA substrates and thereby participates in the suppression of interferon induction. This chain is Nucleoprotein, found in Allpahuayo mammarenavirus (isolate Rat/Peru/CLHP-2472/1997) (ALLV).